The primary structure comprises 238 residues: Ribonuclease HII (238 aa).

The RNase H type-2 domain maps to 12 to 197; the sequence is GIVAGVDEAG…VLELLTDDLL (186 aa). Residues Asp-18, Glu-19, and Asp-107 each contribute to the a divalent metal cation site.

It belongs to the RNase HII family. It depends on Mn(2+) as a cofactor. Requires Mg(2+) as cofactor.

Its subcellular location is the cytoplasm. The enzyme catalyses Endonucleolytic cleavage to 5'-phosphomonoester.. Functionally, endonuclease that specifically degrades the RNA of RNA-DNA hybrids. This is Ribonuclease HII from Thermotoga petrophila (strain ATCC BAA-488 / DSM 13995 / JCM 10881 / RKU-1).